A 482-amino-acid polypeptide reads, in one-letter code: Protein farnesyltransferase subunit beta (482 aa).

4 PFTB repeats span residues 131–172, 182–223, 230–271, and 278–319; these read ESNA…VTLG, REKM…SILN, TQGL…ILIN, and LDSL…VLLQ. (2E,6E)-farnesyl diphosphate contacts are provided by residues 256–259 and 298–301; these read HGGY and RTNK. 2 residues coordinate Zn(2+): Asp-304 and Cys-306. 307-310 is a (2E,6E)-farnesyl diphosphate binding site; sequence YTFW. The tract at residues 329–372 is disordered; sequence VHGSSHISEGTNEEHHAHDEDDLEDSDDDDDSDEDNDEDSVNGH. Acidic residues predominate over residues 348-368; the sequence is EDDLEDSDDDDDSDEDNDEDS. The stretch at 391-433 is one PFTB 5 repeat; it reads SLGLQRYVLLCSKIPDGGFRDKPRKPRDFYHTCYCLSGLSVAQ. A Zn(2+)-binding site is contributed by His-421.

The protein belongs to the protein prenyltransferase subunit beta family. Heterodimer of FTA and FTB (farnesyltransferase). Heterodimer of an alpha and a beta subunit. Zn(2+) is required as a cofactor.

The catalysed reaction is L-cysteinyl-[protein] + (2E,6E)-farnesyl diphosphate = S-(2E,6E)-farnesyl-L-cysteinyl-[protein] + diphosphate. Its function is as follows. Catalyzes the transfer of a farnesyl moiety from farnesyl diphosphate to a cysteine at the fourth position from the C-terminus of several proteins having the C-terminal sequence Cys-aliphatic-aliphatic-X (CaaX). The beta subunit is responsible for peptide-binding. Acts as an abscisic acid (ABA) negative regulator by mediating ASG2 farnesylation and consequently monitoring its subcellular localization. Involved in responses to salt (NaCl) and osmotic (e.g. in response to mannitol and PEG) stresses. The polypeptide is Protein farnesyltransferase subunit beta (FTB) (Arabidopsis thaliana (Mouse-ear cress)).